The chain runs to 313 residues: UbiA prenyltransferase claS (313 aa).

The next 2 helical transmembrane spans lie at 30–52 (FAGT…RALL) and 57–79 (TFGT…GCIW). The NDxxDxxxD motif lies at 81–88 (DILDQDFD). 2 residues coordinate Mg(2+): D84 and D88. 3 helical membrane passes run 99 to 121 (IASG…FILM), 131 to 148 (AWMI…IYPL), and 155 to 177 (WPQA…YTTG). Mg(2+) is bound by residues D205 and D209. The DxxxD motif lies at 205–209 (DKKDD). The YxxxK motif lies at 205 to 209 (DKKDD). The next 3 membrane-spanning stretches (helical) occupy residues 227 to 247 (PVLS…GILN), 250 to 270 (ELPY…TQLW), and 293 to 313 (AIVW…GAIM).

It belongs to the UbiA prenyltransferase family. The cofactor is Mg(2+).

It is found in the membrane. It catalyses the reaction hydroquinone + (2E)-geranyl diphosphate = (2E)-geranylhydroquinone + diphosphate. The protein operates within secondary metabolite biosynthesis; terpenoid biosynthesis. Prenyltransferase; part of the gene cluster that mediates the biosynthesis of clavilactone A, a meroterpenoid that features a unique benzo-fused ten-membered carbocyclic ring unit with an alpha,beta-epoxy-gamma-lactone moiety, forming an intriguing 10/5/3 tricyclic nested skeleton. ClaR, ClaS and ClaT are sufficient to produce clavilactone A. Within the pathway, claS acts as an atypical UbiA prenyltransferase that transfers geranyl pyrophosphate (GPP) to hydroquinone (HYQ) instead of p-hydroxybenzoic acid (PHB), producing the first intermediate geranylhydroquinone. The cytochrome P450 monooxygenase claR then catalyzes the diradical coupling reaction between the intramolecular hydroquinone and allyl moieties to form the benzo-fused ten-membered carbocyclic ring unit of wigantol. Finally the cytochrome P450 monooxygenase claT exquisitely and stereoselectively assembles the alpha,beta-epoxy-gamma-lactone moiety, producing clavilactone A via arnebinol A. The chain is UbiA prenyltransferase claS from Ampulloclitocybe clavipes (Club foot).